Here is a 349-residue protein sequence, read N- to C-terminus: Deoxyguanosinetriphosphate triphosphohydrolase-like protein (349 aa).

One can recognise an HD domain in the interval 80–197 (RLTHTLEVAQ…VKYSDKIAYV (118 aa)).

It belongs to the dGTPase family. Type 2 subfamily.

The protein is Deoxyguanosinetriphosphate triphosphohydrolase-like protein of Clostridium tetani (strain Massachusetts / E88).